The following is a 512-amino-acid chain: Maturase K (512 aa).

This sequence belongs to the intron maturase 2 family. MatK subfamily.

The protein localises to the plastid. Its subcellular location is the chloroplast. Functionally, usually encoded in the trnK tRNA gene intron. Probably assists in splicing its own and other chloroplast group II introns. In Erythranthe guttata (Yellow monkey flower), this protein is Maturase K.